The following is a 1528-amino-acid chain: Cell surface antigen I/II (1528 aa).

The first 50 residues, 1–50 (MLQKCKLEGIIICNEKRLLGAAKVKSGRTLSGALLGTAILASGAGQKALA), serve as a signal peptide directing secretion. The tract at residues 50 to 156 (AEETSTTSTS…PEIKDDYSKQ (107 aa)) is disordered. The span at 51–68 (EETSTTSTSGGDTAVVGT) shows a compositional bias: low complexity. Composition is skewed to polar residues over residues 83 to 97 (NPSSQAETSQAQARQ) and 124 to 133 (TVSQDATVNK). Over residues 142–154 (ANQKEPEIKDDYS) the composition is skewed to basic and acidic residues. Ag I/II A repeat units follow at residues 161 to 235 (QKAT…QQAN), 236 to 315 (SDSQ…QAGN), 316 to 396 (AANE…QSGN), and 397 to 478 (AANE…KKDL). Disordered regions lie at residues 840-951 (VPKV…VEPV) and 1459-1480 (SNTVRTSTPEPKQPSPVDPKTT). Residues 855–879 (TKPDEPTYEVEKELVDLPVEPKYEP) show a composition bias toward basic and acidic residues. Residues 1459 to 1468 (SNTVRTSTPE) show a composition bias toward polar residues. Residues 1503 to 1507 (LPATG) carry the LPXTG sorting signal motif. Threonine 1506 bears the Pentaglycyl murein peptidoglycan amidated threonine mark. The propeptide at 1507–1528 (GDSSNAYLPLLGLVSLTAGFSC) is removed by sortase.

Belongs to the antigen I/II family.

It is found in the secreted. It localises to the cell wall. The protein is Cell surface antigen I/II of Streptococcus downei (Streptococcus sobrinus).